A 103-amino-acid polypeptide reads, in one-letter code: Trp operon repressor homolog (103 aa).

Residues 62–85 mediate DNA binding; it reads QRKISELLGVGVATITRGSNELKH.

The protein belongs to the TrpR family. In terms of assembly, homodimer.

It is found in the cytoplasm. In terms of biological role, this protein is an aporepressor. When complexed with L-tryptophan it binds the operator region of the trp operon and prevents the initiation of transcription. This Photobacterium profundum (strain SS9) protein is Trp operon repressor homolog.